The chain runs to 198 residues: Recombination protein RecR (198 aa).

A C4-type zinc finger spans residues 57 to 72 (CSVCGHITENDPCYIC). The Toprim domain occupies 80-175 (SVICVVEDDK…KVTRLAQGLS (96 aa)).

The protein belongs to the RecR family.

May play a role in DNA repair. It seems to be involved in an RecBC-independent recombinational process of DNA repair. It may act with RecF and RecO. This chain is Recombination protein RecR, found in Staphylococcus aureus (strain Mu3 / ATCC 700698).